The chain runs to 864 residues: Sine oculis-binding protein homolog (864 aa).

The span at 1–14 (MAEMEKEGRPPENK) shows a compositional bias: basic and acidic residues. Residues 1-25 (MAEMEKEGRPPENKRSRKPAHPVKR) form a disordered region. FCS-type zinc fingers lie at residues 142–180 (DEVSNVQIMCAWCQKVGIKRYSLSMGSEVKSFCSEKCFA) and 216–256 (FKNN…KCLN). Disordered stretches follow at residues 304–360 (LTDA…ETPS), 413–484 (RGPP…PGAP), and 550–616 (KPPN…RGRG). Composition is skewed to low complexity over residues 314–335 (PVAAAGQSQGPGPSSSTTVSPS) and 417–433 (HHASNPNSPLSNPMLPG). Pro residues predominate over residues 460 to 484 (IHPPSTPTMPGNPPGLLPPPPPGAP). Low complexity-rich tracts occupy residues 565 to 582 (SAPGDSSAAGGKAGGRSL) and 590 to 603 (GSSKSADSPPGSSG). The SUMO interaction motif 1 (SIM); mediates the binding to polysumoylated substrates signature appears at 618-622 (VVDLT). A Phosphoserine modification is found at serine 627. Residues 648-652 (VIDLT) carry the SUMO interaction motif 2 (SIM); mediates the binding to polysumoylated substrates motif. Lysine 672 participates in a covalent cross-link: Glycyl lysine isopeptide (Lys-Gly) (interchain with G-Cter in SUMO2). Phosphoserine is present on serine 694. Residues 725–750 (APAEAKGAEPPPEQPPPPAPPKKLLS) form a disordered region. The segment covering 733–745 (EPPPEQPPPPAPP) has biased composition (pro residues).

The protein belongs to the SOBP family. As to quaternary structure, interacts (via SIM domains) with SUMO1 and SUMO2.

In terms of biological role, implicated in development of the cochlea. The protein is Sine oculis-binding protein homolog of Rattus norvegicus (Rat).